The primary structure comprises 116 residues: Diuretic hormone class 2 (116 aa).

Positions 1-25 (MTNRCACFALAFLLFCLLAISSIEA) are cleaved as a signal peptide. The propeptide occupies 26 to 75 (APMPSQSNGGYGGAGYNELEEVPDDLLMELMTRFGRTIIRARNDLENSKR). P106 is subject to Proline amide. Residues 112–116 (SETDV) constitute a propeptide that is removed on maturation.

It is found in the secreted. Functionally, regulation of fluid secretion. Stimulates Malpighian tubules fluid secretion by activating the apical membrane V-ATPase via cyclic AMP of principal cells in the main secretory segment. The chain is Diuretic hormone class 2 (Dh31) from Drosophila melanogaster (Fruit fly).